The primary structure comprises 378 residues: Chaperone protein DnaJ (378 aa).

One can recognise a J domain in the interval 5–70 (DYYEVLGVGR…NKKAAYDQFG (66 aa)). The CR-type zinc-finger motif lies at 134-212 (GLTKELRIPT…CHGDGRVEKT (79 aa)). Zn(2+) contacts are provided by Cys-147, Cys-150, Cys-164, Cys-167, Cys-186, Cys-189, Cys-200, and Cys-203. CXXCXGXG motif repeat units lie at residues 147-154 (CDVCDGSG), 164-171 (CTTCHGQG), 186-193 (CPTCHGRG), and 200-207 (CAKCHGDG).

This sequence belongs to the DnaJ family. In terms of assembly, homodimer. The cofactor is Zn(2+).

The protein localises to the cytoplasm. In terms of biological role, participates actively in the response to hyperosmotic and heat shock by preventing the aggregation of stress-denatured proteins and by disaggregating proteins, also in an autonomous, DnaK-independent fashion. Unfolded proteins bind initially to DnaJ; upon interaction with the DnaJ-bound protein, DnaK hydrolyzes its bound ATP, resulting in the formation of a stable complex. GrpE releases ADP from DnaK; ATP binding to DnaK triggers the release of the substrate protein, thus completing the reaction cycle. Several rounds of ATP-dependent interactions between DnaJ, DnaK and GrpE are required for fully efficient folding. Also involved, together with DnaK and GrpE, in the DNA replication of plasmids through activation of initiation proteins. This is Chaperone protein DnaJ from Shewanella oneidensis (strain ATCC 700550 / JCM 31522 / CIP 106686 / LMG 19005 / NCIMB 14063 / MR-1).